The chain runs to 2254 residues: Genome polyprotein (2254 aa).

One can recognise an SF3 helicase domain in the interval 438 to 592 (QTTINELAQL…EQWLVDNPGR (155 aa)). ATP is bound at residue 464–471 (GPPGIGKT). At Tyr956 the chain carries O-(5'-phospho-RNA)-tyrosine. Residues 1041–1196 (GDTYDSEGRG…KKLVSRVQTK (156 aa)) enclose the Peptidase C24 domain. Residues His1078, Asp1099, and Cys1163 each act as for 3CLpro activity in the active site. One can recognise a RdRp catalytic domain in the interval 1434–1559 (RVLYCLDYSK…GLTPATASIM (126 aa)). Residues 1714 to 1742 (PAPTRSVASNPEGTQNSNESRPVQPAGPM) are disordered. A compositionally biased stretch (polar residues) spans 1719 to 1734 (SVASNPEGTQNSNESR).

As to quaternary structure, homodimer. Homomultimer. In terms of assembly, interacts with host IEF4E; this interaction plays a role in translation of viral proteins. In terms of processing, specific enzymatic cleavages in vivo yield mature proteins. Pro-Pol is first autocatalytically cleaved, then processes the whole polyprotein. Post-translationally, VPg is uridylylated by the polymerase and is covalently attached to the 5'-end of the polyadenylated genomic and subgenomic RNAs. This uridylylated form acts as a nucleotide-peptide primer for the polymerase.

It is found in the virion. The protein localises to the host cytoplasm. The catalysed reaction is a ribonucleoside 5'-triphosphate + H2O = a ribonucleoside 5'-diphosphate + phosphate + H(+). The enzyme catalyses RNA(n) + a ribonucleoside 5'-triphosphate = RNA(n+1) + diphosphate. It carries out the reaction Endopeptidase with a preference for cleavage when the P1 position is occupied by Glu-|-Xaa and the P1' position is occupied by Gly-|-Yaa.. Its function is as follows. Together with NTPase and NS4, initiates the formation of the replication complex. Induces the proliferation of the host smooth ER membranes forming long tubular structures. These remodeled membranes probably form the viral factories that contain the replication complex. In terms of biological role, displays NTPase activity, but no helicase activity. Induces the formation of convoluted membranes derived from the host ER. These remodeled membranes probably form the viral factories that contain the replication complex. Together with NS2 and NS4, initiates the formation of the replication complex. Probable key protein responsible for the formation of membrane alterations by the virus. Induces the formation of convoluted membranes derived from the host ER. These remodeled membranes probably form the viral factories that contain the replication complex. Together with NS2 and NTPase, initiates the formation of the replication complex. Functionally, viral genome-linked protein is covalently linked to the 5'-end of the positive-strand, negative-strand genomic RNAs and subgenomic RNA. Acts as a genome-linked replication primer. May recruit ribosome to viral RNA thereby promoting viral proteins translation. Interacts with host translation initiation complex to allow the translation of viral proteins. Its function is as follows. Protease-polymerase p76 processes the polyprotein: Pro-Pol is first released by autocleavage, then all other proteins are cleaved. Cleaves host translation initiation factor eIF4G1, eIF4G2 and PABP1 thereby inducing a shutdown of host protein synthesis. This shutdown may not prevent viral mRNA from being translated since viral Vpg replaces the cap. It is also an RNA-directed RNA polymerase which replicates genomic and antigenomic viral RNA by recognizing specific signals. Also transcribes a subgenomic mRNA by initiating RNA synthesis internally on antigenomic RNA. This sgRNA codes for structural proteins. Catalyzes the covalent attachment VPg with viral RNAs. In terms of biological role, capsid protein self assembles to form an icosahedral capsid with a T=3 symmetry, about 38 nm in diameter, and consisting of 180 capsid proteins. The capsid encapsulate the genomic RNA and VP2 proteins. Attaches virion to target cells, inducing endocytosis of the viral particle. Acidification of the endosome induces conformational change of capsid protein thereby injecting virus genomic RNA into host cytoplasm. This chain is Genome polyprotein, found in Porcine enteric sapovirus (isolate Swine/United States/Cowden/1980) (Sw/SV/Cowden/1980/US).